The following is a 377-amino-acid chain: DNA primase small subunit PriS (377 aa).

Active-site residues include aspartate 99, aspartate 101, and aspartate 274.

This sequence belongs to the eukaryotic-type primase small subunit family. As to quaternary structure, heterodimer of a small subunit (PriS) and a large subunit (PriL). The cofactor is Mg(2+). Mn(2+) serves as cofactor.

Catalytic subunit of DNA primase, an RNA polymerase that catalyzes the synthesis of short RNA molecules used as primers for DNA polymerase during DNA replication. The small subunit contains the primase catalytic core and has DNA synthesis activity on its own. Binding to the large subunit stabilizes and modulates the activity, increasing the rate of DNA synthesis while decreasing the length of the DNA fragments, and conferring RNA synthesis capability. The DNA polymerase activity may enable DNA primase to also catalyze primer extension after primer synthesis. May also play a role in DNA repair. This chain is DNA primase small subunit PriS, found in Staphylothermus marinus (strain ATCC 43588 / DSM 3639 / JCM 9404 / F1).